The chain runs to 285 residues: tRNA (guanine-N(7)-)-methyltransferase (285 aa).

S-adenosyl-L-methionine is bound by residues Gly102, 125 to 126, 160 to 161, and Cys180; these read EI and NA. Residue Asp183 is part of the active site. 258 to 260 lines the S-adenosyl-L-methionine pocket; it reads TEE.

The protein belongs to the class I-like SAM-binding methyltransferase superfamily. TrmB family. In terms of assembly, forms a complex with TRM82.

The protein resides in the nucleus. It catalyses the reaction guanosine(46) in tRNA + S-adenosyl-L-methionine = N(7)-methylguanosine(46) in tRNA + S-adenosyl-L-homocysteine. Its pathway is tRNA modification; N(7)-methylguanine-tRNA biosynthesis. Catalyzes the formation of N(7)-methylguanine at position 46 (m7G46) in tRNA. The protein is tRNA (guanine-N(7)-)-methyltransferase of Candida glabrata (strain ATCC 2001 / BCRC 20586 / JCM 3761 / NBRC 0622 / NRRL Y-65 / CBS 138) (Yeast).